The primary structure comprises 205 residues: MSKRESSKYKIDRRMGENIWGRPKSPVNRREYGPGQHGQRRKGKLSDFGVQLRAKQKLKGYYGDLREKQFRAIFAEADRRKGDTSENLIGLLESRLDAIVYRAKFVPTVFAARQFVNHGHVSVNGVRVNIGSYRCKAGDVIEVREKSKQLVIVLEAVSLAERDVPDYIEVDHNKMVATFGRVPTLSDVPFPVVMEPHLVVEFYSR.

Over residues 1–16 the composition is skewed to basic and acidic residues; it reads MSKRESSKYKIDRRMG. Residues 1–46 are disordered; it reads MSKRESSKYKIDRRMGENIWGRPKSPVNRREYGPGQHGQRRKGKLS. Positions 94 to 157 constitute an S4 RNA-binding domain; that stretch reads SRLDAIVYRA…KQLVIVLEAV (64 aa).

The protein belongs to the universal ribosomal protein uS4 family. Part of the 30S ribosomal subunit. Contacts protein S5. The interaction surface between S4 and S5 is involved in control of translational fidelity.

Its function is as follows. One of the primary rRNA binding proteins, it binds directly to 16S rRNA where it nucleates assembly of the body of the 30S subunit. With S5 and S12 plays an important role in translational accuracy. The sequence is that of Small ribosomal subunit protein uS4 from Rhizobium johnstonii (strain DSM 114642 / LMG 32736 / 3841) (Rhizobium leguminosarum bv. viciae).